Reading from the N-terminus, the 113-residue chain is Large ribosomal subunit protein bL19 (113 aa).

Belongs to the bacterial ribosomal protein bL19 family.

In terms of biological role, this protein is located at the 30S-50S ribosomal subunit interface and may play a role in the structure and function of the aminoacyl-tRNA binding site. In Corynebacterium urealyticum (strain ATCC 43042 / DSM 7109), this protein is Large ribosomal subunit protein bL19.